A 407-amino-acid chain; its full sequence is Peptidase T (407 aa).

A Zn(2+)-binding site is contributed by His82. Residue Asp84 is part of the active site. Asp143 provides a ligand contact to Zn(2+). The Proton acceptor role is filled by Glu177. Residues Glu178, Asp200, and His382 each coordinate Zn(2+).

The protein belongs to the peptidase M20B family. Zn(2+) is required as a cofactor.

It is found in the cytoplasm. It catalyses the reaction Release of the N-terminal residue from a tripeptide.. In terms of biological role, cleaves the N-terminal amino acid of tripeptides. This chain is Peptidase T, found in Streptococcus pyogenes serotype M4 (strain MGAS10750).